The sequence spans 2225 residues: Multifunctional protein CAD (2225 aa).

A2 is modified (N-acetylalanine). The tract at residues 2 to 365 (AALVLEDGSV…TVKEATAGNP (364 aa)) is GATase (Glutamine amidotransferase). The L-glutamine site is built by S44, G222, and G224. In terms of domain architecture, Glutamine amidotransferase type-1 spans 177 to 363 (RILALDCGLK…LETVKEATAG (187 aa)). C252 (nucleophile; for GATase activity) is an active-site residue. L-glutamine contacts are provided by L253, Q256, N294, G296, and F297. Active-site for GATase activity residues include H336 and E338. A linker region spans residues 366–394 (GGQTVRERLTERLCPPGIPTPGSGLPPPR). The segment at 395–933 (KVLILGSGGL…TTHDLTFRTP (539 aa)) is CPSase A. Residues 395–1455 (KVLILGSGGL…APPLKVHVDC (1061 aa)) are CPSase (Carbamoyl phosphate synthase). At T456 the chain carries Phosphothreonine; by MAPK1. Residues R515, R555, G561, G562, K592, E599, G625, I626, H627, Q668, and E682 each contribute to the ATP site. The 193-residue stretch at 519-711 (AARMAEIGEH…LAYVAAKLAL (193 aa)) folds into the ATP-grasp 1 domain. Residues Q668, E682, and N684 each coordinate Mg(2+). The Mn(2+) site is built by Q668, E682, and N684. K747 carries the post-translational modification N6-acetyllysine. Residues 934–1455 (HVLVLGSGVY…APPLKVHVDC (522 aa)) form a CPSase B region. Residue S1038 is modified to Phosphoserine. Residues 1052-1243 (SRLLDTIGIS…LVALATRVIM (192 aa)) form the ATP-grasp 2 domain. Positions 1088, 1127, 1129, 1134, 1159, 1160, 1161, 1162, 1202, and 1214 each coordinate ATP. Mg(2+) contacts are provided by Q1202, E1214, and N1216. Residues Q1202, E1214, and N1216 each coordinate Mn(2+). One can recognise an MGS-like domain in the interval 1308 to 1462 (FKIPKKNILL…VDCMTSQKLV (155 aa)). The residue at position 1406 (S1406) is a Phosphoserine; by PKA. K1411 is modified (N6-acetyllysine). The tract at residues 1456–1788 (MTSQKLVRLP…VKGTVRRVVL (333 aa)) is DHOase (dihydroorotase). 2 residues coordinate Zn(2+): H1471 and H1473. Residues R1475 and N1505 each contribute to the (S)-dihydroorotate site. The Zn(2+) site is built by K1556, H1590, C1613, H1614, and E1637. K1556 is subject to N6-carboxylysine. R1661 is a (S)-dihydroorotate binding site. Position 1686 (D1686) interacts with Zn(2+). The active-site For DHOase activity is D1686. (S)-dihydroorotate-binding residues include H1690 and P1702. The tract at residues 1789–1917 (RGEVAYIDGQ…GLLHPQTSPL (129 aa)) is linker. Positions 1811 to 1899 (KWPQGAVPQL…YPPPPVPRQA (89 aa)) are disordered. A compositionally biased stretch (polar residues) spans 1825 to 1834 (PATSEMTTTP). A Phosphoserine; by RPS6KB1 and PKA modification is found at S1859. The span at 1866 to 1878 (EEPKEKSSRKVAE) shows a compositional bias: basic and acidic residues. The residue at position 1873 (S1873) is a Phosphoserine; by PKC; in vitro. At T1884 the chain carries Phosphothreonine. S1900 and S1938 each carry phosphoserine. The tract at residues 1918–2225 (LHSLVGQHIL…ALLATVLGRF (308 aa)) is ATCase (Aspartate transcarbamylase). The carbamoyl phosphate site is built by R1975 and T1976. K2003 is a binding site for L-aspartate. Residues R2024, H2052, and Q2055 each contribute to the carbamoyl phosphate site. Positions 2085 and 2146 each coordinate L-aspartate. Residues M2185 and P2186 each coordinate carbamoyl phosphate.

In the N-terminal section; belongs to the CarA family. This sequence in the 2nd section; belongs to the CarB family. It in the 3rd section; belongs to the metallo-dependent hydrolases superfamily. DHOase family. CAD subfamily. The protein in the C-terminal section; belongs to the aspartate/ornithine carbamoyltransferase superfamily. ATCase family. Homohexamer. Interacts with CIPC. Requires Zn(2+) as cofactor. The cofactor is Mg(2+). Mn(2+) serves as cofactor. Post-translationally, activated by MAP kinase (Erk1/2) phosphorylation just prior to the S phase of the cell cycle, when the demand for pyrimidine nucleotides is greatest, and down-regulated as the cells emerge from S phase by protein kinase A (PKA) phosphorylation. Phosphorylation at Ser-1859 by RPS6KB1 downstream of MTOR promotes oligomerization and stimulates dihydroorotase activity. Phosphorylation at Ser-1406 reduces sensitivity to feedback inhibition by UTP.

The protein localises to the cytoplasm. Its subcellular location is the nucleus. The catalysed reaction is hydrogencarbonate + L-glutamine + 2 ATP + H2O = carbamoyl phosphate + L-glutamate + 2 ADP + phosphate + 2 H(+). It carries out the reaction L-glutamine + H2O = L-glutamate + NH4(+). The enzyme catalyses hydrogencarbonate + NH4(+) + 2 ATP = carbamoyl phosphate + 2 ADP + phosphate + 2 H(+). It catalyses the reaction carbamoyl phosphate + L-aspartate = N-carbamoyl-L-aspartate + phosphate + H(+). The catalysed reaction is (S)-dihydroorotate + H2O = N-carbamoyl-L-aspartate + H(+). It participates in pyrimidine metabolism; UMP biosynthesis via de novo pathway; (S)-dihydroorotate from bicarbonate: step 1/3. Its pathway is pyrimidine metabolism; UMP biosynthesis via de novo pathway; (S)-dihydroorotate from bicarbonate: step 2/3. It functions in the pathway pyrimidine metabolism; UMP biosynthesis via de novo pathway; (S)-dihydroorotate from bicarbonate: step 3/3. Allosterically regulated and controlled by phosphorylation. 5-phosphoribose 1-diphosphate (PRPP) is an activator while UMP and UTP are inhibitors of the CPSase reaction. In terms of biological role, multifunctional protein that encodes the first 3 enzymatic activities of the de novo pyrimidine pathway: carbamoylphosphate synthetase (CPSase; EC 6.3.5.5), aspartate transcarbamylase (ATCase; EC 2.1.3.2) and dihydroorotase (DHOase; EC 3.5.2.3). The CPSase-function is accomplished in 2 steps, by a glutamine-dependent amidotransferase activity (GATase) that binds and cleaves glutamine to produce ammonia, followed by an ammonium-dependent carbamoyl phosphate synthetase, which reacts with the ammonia, hydrogencarbonate and ATP to form carbamoyl phosphate. The endogenously produced carbamoyl phosphate is sequestered and channeled to the ATCase active site. ATCase then catalyzes the formation of carbamoyl-L-aspartate from L-aspartate and carbamoyl phosphate. In the last step, DHOase catalyzes the cyclization of carbamoyl aspartate to dihydroorotate. The polypeptide is Multifunctional protein CAD (Homo sapiens (Human)).